The primary structure comprises 492 residues: Protein nucleotidyltransferase YdiU (492 aa).

Residues Gly-90, Gly-92, Arg-93, Lys-113, Asp-125, Gly-126, Arg-176, and Arg-183 each contribute to the ATP site. Asp-252 serves as the catalytic Proton acceptor. Positions 253 and 262 each coordinate Mg(2+). Asp-262 contacts ATP.

The protein belongs to the SELO family. Mg(2+) serves as cofactor. Mn(2+) is required as a cofactor.

The catalysed reaction is L-seryl-[protein] + ATP = 3-O-(5'-adenylyl)-L-seryl-[protein] + diphosphate. It catalyses the reaction L-threonyl-[protein] + ATP = 3-O-(5'-adenylyl)-L-threonyl-[protein] + diphosphate. The enzyme catalyses L-tyrosyl-[protein] + ATP = O-(5'-adenylyl)-L-tyrosyl-[protein] + diphosphate. It carries out the reaction L-histidyl-[protein] + UTP = N(tele)-(5'-uridylyl)-L-histidyl-[protein] + diphosphate. The catalysed reaction is L-seryl-[protein] + UTP = O-(5'-uridylyl)-L-seryl-[protein] + diphosphate. It catalyses the reaction L-tyrosyl-[protein] + UTP = O-(5'-uridylyl)-L-tyrosyl-[protein] + diphosphate. Functionally, nucleotidyltransferase involved in the post-translational modification of proteins. It can catalyze the addition of adenosine monophosphate (AMP) or uridine monophosphate (UMP) to a protein, resulting in modifications known as AMPylation and UMPylation. The polypeptide is Protein nucleotidyltransferase YdiU (Thioalkalivibrio sulfidiphilus (strain HL-EbGR7)).